We begin with the raw amino-acid sequence, 728 residues long: Catalase-peroxidase 1 (728 aa).

Positions 91–218 (WHSAGTYRTA…LAAVQMGLIY (128 aa)) form a cross-link, tryptophyl-tyrosyl-methioninium (Trp-Tyr) (with M-244). Histidine 92 acts as the Proton acceptor in catalysis. The segment at residues 218-244 (YVNPEGPDGNPDPVAAAHDIRETFARM) is a cross-link (tryptophyl-tyrosyl-methioninium (Tyr-Met) (with W-91)). Histidine 259 is a binding site for heme b.

This sequence belongs to the peroxidase family. Peroxidase/catalase subfamily. As to quaternary structure, homodimer or homotetramer. Requires heme b as cofactor. In terms of processing, formation of the three residue Trp-Tyr-Met cross-link is important for the catalase, but not the peroxidase activity of the enzyme.

It catalyses the reaction H2O2 + AH2 = A + 2 H2O. The enzyme catalyses 2 H2O2 = O2 + 2 H2O. Functionally, bifunctional enzyme with both catalase and broad-spectrum peroxidase activity. The sequence is that of Catalase-peroxidase 1 from Burkholderia cenocepacia (strain ATCC BAA-245 / DSM 16553 / LMG 16656 / NCTC 13227 / J2315 / CF5610) (Burkholderia cepacia (strain J2315)).